The following is a 380-amino-acid chain: Putative glutamate--cysteine ligase 2-2 (380 aa).

Belongs to the glutamate--cysteine ligase type 2 family. YbdK subfamily.

It carries out the reaction L-cysteine + L-glutamate + ATP = gamma-L-glutamyl-L-cysteine + ADP + phosphate + H(+). In terms of biological role, ATP-dependent carboxylate-amine ligase which exhibits weak glutamate--cysteine ligase activity. This chain is Putative glutamate--cysteine ligase 2-2, found in Nocardia farcinica (strain IFM 10152).